Consider the following 201-residue polypeptide: Orotate phosphoribosyltransferase (201 aa).

A 5-phospho-alpha-D-ribose 1-diphosphate-binding site is contributed by 113–121 (EDIITTGKS). Orotate is bound by residues threonine 117 and arginine 145.

The protein belongs to the purine/pyrimidine phosphoribosyltransferase family. PyrE subfamily. In terms of assembly, homodimer. It depends on Mg(2+) as a cofactor.

It carries out the reaction orotidine 5'-phosphate + diphosphate = orotate + 5-phospho-alpha-D-ribose 1-diphosphate. It participates in pyrimidine metabolism; UMP biosynthesis via de novo pathway; UMP from orotate: step 1/2. Catalyzes the transfer of a ribosyl phosphate group from 5-phosphoribose 1-diphosphate to orotate, leading to the formation of orotidine monophosphate (OMP). The chain is Orotate phosphoribosyltransferase from Helicobacter pylori (strain HPAG1).